A 2438-amino-acid chain; its full sequence is MAHMEPIAIVGTACRFAGSSSSPSKLWELLQNPRDVASEPPADRFNIDAFYDPEGSNPMATNARQGVSCAAPQYGSVGVARNNLANRISYFFDWQGPSMSIDTACSASMVALYEAVSALTRHDCNLAAALGANLMLSPQMFIAASNLQMLSPTSRSRMWDAQADGYARGEGVASVLLKRLSDAVADGDPIECVIRAVGVNHDGRSMGFTMPSSDAQVQLIRSTYAKAGLDPRSAEDRPQYVEAHGTGTLAGDPQEASALHQAFFSSSDEDTVLHVGSIKTVVGHAEGTAGLAGLIKASQCIQHGIIPPNLLFNRLNPALEPYARQLRVPVDVVPWPPLSPGVPRRVSVNSFGFGGTNAHVILESYEPAEGLIKVDCNQNAVLPFVFSAESDFSLGSVLEQYSRYLSRNPDVEVHDLAWTLLERRSALMHRVGFWAPDIAHLKRSIQDELAVRKGGAPSTLICRPHGKTRKHILGVFTGQGAQWAQMGLELITTSNTARGWLDELQQSLDALPEPYRPGFSLFQELAADSATSRLSEALLSQTLCTAMQVIWVKMLWALNIHFDAVVGHSSGEIAAGFAAGFLTAEDAIRIAYLRGVFCSAPGSSGEGAMLAAGLSMDEATALCEDVSSSEGRINVAASNSPESVTVSGDRDAILRAEQLLKDRGIFVRLLRVSTAYHSHHMQACSQPYQDALRGCNIQIQTPMSTTTWYSSVYAGRPMEEGSVTETLGTGEYWAENLVSPVLFSQALSAAMSATNPSLIVEVGPHPALKGPALQTLSGITPAEIPYIGVSVRNNSAIESMATAIGAFWAHLGPQAINPRGYLALFQPNTKPSVVRGLPLYPFDHRQEHGYQTRKANGWLYRRNTPHPLLGSLSEDLGEGELRWNHYLSPRRIRWLDGHRVQGQIVVPATAYIVMALEAALALAVVKEKSLHLIRIDDLIIGQAISFQDERDEVETLFHLPPMLENRDDNTAVGRFRCQMAASGGHIKTCAEGILTVTWGSPQDDVLPCPVFPSPAGLADVTDMEEYYASLRTLGYEYTGVFQGIHSLSRKMGIATGQVYNPALTGFLIHPAVLDTGLQGLLAAAGEGQLTTLHVPTRIDTVSVNPAVCSIDSLSFEAAVTRTGADGIVGDVELYTAANGPGAVFFEGVHVSSLVPPSAADDPSVFWVQHWTPLVLDVNRSESRLSPEWMTVLEGYERRAFLALKDILQEVTPELRATFDWHRESVVSWIEHIMEETRMGQRASCKPEWLGQNLENLGHIWGRPDASIEDRMMYRVYQNLLPFLRGEAKMLDALRQDELLTQFYRDEHELRDVNRRLGQLVGDLAVRFPRMKLLEVGAGTGSATREVLKHVSRAYHSYTFTDISVGFFEDMLETLPEHADRLIFQKLDVGQDPLEQGFTENAYDVIIAANVLHATPALHETLRNVRRLLKPGGYLIALEITNIDAIRIGYLMCAFDGWWLGREDGRPWGPVVSASQWDSLLRETGFGGIDSITDRAADELTMYSVFAAQAVDDQITRIREPLTPLPPQPPFCRGVIIGGSPNLVTGVRAIIHPFFSDVEHVSAIENLTEGAPAVVLMVADLSDTPCFQSLTESRLAGLKALVKMAEKTLWVTMGSEAENPFLCLSKGFLTSMNYEHPNVFQYLNIIDPADVQPVVLSEHLLRLAHTTQNNDFTLTSCVHSTELELRLYPGGILKFPRINASNVLNRRYAAARRPVTSPVTDMQESVVVLGQGPDGKLQLLLGEERLLGDRTGVTINVRYSTNRAVRINGAGYLVLVLGQDKVTKTRLVALAGQSASVISTSCYWEIPADISEEQEAAYLYATATALLAASLIQSNGTTILVHGADAILRHAIAIEAASRVVQPIFTTTSPSAASSTGFGKSILVHQNESRRQLAHLLPRYFTAAVNFDSNDHRLFDRMMAIGHQSGVTQEHLLTTLTAVLPRPSASSLPAHPQAVIDALRKAALTAYQLTVQSTAPGHIATSIADIQSCSQELAVADWTPPCGSVPVHLQPASQLVRLSAQKTYLLVGMTGALGQSITQWLIARGARNIVLTSRNPSVDPAWILEMQSTTGARVLVTSMDVTSRASILAVAHALKAGWPPLGGVVNGAMVLWDQLFVDAPLSVLTGQLAPKVQGSLLLDEIFGQEPGLDFFILFGSAIATIGNLGQSAYTAASNFMVALAARRRARGLVASVLQPAQVAGTMGYLRDKDDSFWARMFDMIGRHLVSEPDLHELFAHAILSGRGPPSDVGFGPGEGECVIGGLSVQDPAVYPNILWFRTPKVWPFIHYHHEGTGPSSAATGSVPLVEQLKCATSLAQVGEVVEAGVAAKLHHRLHLPGEVGSGNVTGDTRLTELGVDSLIAVDLRRWFAQELEVDIPVLQMLSGCSVKELAAAATALLQPKFYPGVVGDSDVGSEKDGSSDSRGDTSSSSYQVITPEESD.

The Ketosynthase family 3 (KS3) domain occupies 4–364; that stretch reads MEPIAIVGTA…GTNAHVILES (361 aa). Residues cysteine 105, histidine 244, and histidine 284 each act as for beta-ketoacyl synthase activity in the active site. The interval 475 to 777 is malonyl-CoA:ACP transacylase (MAT) domain; it reads VFTGQGAQWA…LKGPALQTLS (303 aa). Serine 569 serves as the catalytic For malonyltransferase activity. The segment at 866–1001 is N-terminal hotdog fold; sequence HPLLGSLSED…GILTVTWGSP (136 aa). The dehydratase (DH) domain stretch occupies residues 866-1153; sequence HPLLGSLSED…FFEGVHVSSL (288 aa). Residues 866-1159 enclose the PKS/mFAS DH domain; it reads HPLLGSLSED…VSSLVPPSAA (294 aa). Histidine 898 acts as the Proton acceptor; for dehydratase activity in catalysis. The segment at 1018–1159 is C-terminal hotdog fold; the sequence is ADVTDMEEYY…VSSLVPPSAA (142 aa). Residue aspartate 1074 is the Proton donor; for dehydratase activity of the active site. The methyltransferase (CMet) domain stretch occupies residues 1297-1492; it reads ELLTQFYRDE…TGFGGIDSIT (196 aa). The segment at 2022–2193 is ketoreductase (KR) domain; sequence TYLLVGMTGA…ARGLVASVLQ (172 aa). A Carrier domain is found at 2318–2396; that stretch reads EVVEAGVAAK…ELAAAATALL (79 aa). O-(pantetheine 4'-phosphoryl)serine is present on serine 2356. The interval 2402–2438 is disordered; it reads PGVVGDSDVGSEKDGSSDSRGDTSSSSYQVITPEESD. Positions 2411–2422 are enriched in basic and acidic residues; it reads GSEKDGSSDSRG.

Pantetheine 4'-phosphate serves as cofactor.

The protein operates within mycotoxin biosynthesis. Highly reducing polyketide synthase (HR-PKS); part of the gene cluster that mediates the biosynthesis of citreoviridin, an inhibitor of the of F1-ATPase beta-subunit. The HR-PKS ctvA accepts acetyl-CoA as the starter unit and catalyzes eight iterations of malonyl-CoA extension and four iterations of SAM-dependent methylation at C4, C12, C14, and C16. The KR and DH domains selectively act on the first six iterations to generate the hexaene chain. In the last three iterations, the KR and DH domains terminate their functions to yield a beta,delta-diketo ester moiety, which then undergoes intramolecular cyclization to yield an alpha-pyrone intermediate. Subsequently, ctvB methylates the alpha-pyrone hydroxyl group to generate citreomontanin. In order to form the tetrahydrofuran ring with the correct stereochemistry, the terminal alkenes of citreomontanin need to undergo isomerization to yield a (17Z)-hexaene, a step that could be catalyzed by ctvC. The (17Z)-hexaene then undergoes bisepoxidation by ctvC to form a (17R,16R,15S,14R)-bisepoxide moiety. Lastly, ctvD acts as a regioselective hydrolase to form the tetrahydrofuran ring with the substituents in the correct absolute configuration, completing the biosynthesis of citreoviridin. The protein is Highly reducing polyketide synthase ctvA of Aspergillus terreus (strain NIH 2624 / FGSC A1156).